Consider the following 557-residue polypeptide: Transcription factor fil1 (557 aa).

A disordered region spans residues 234 to 258 (SPVKRELNDSTSPSKLSESSSSLTG). Low complexity predominate over residues 243-258 (STSPSKLSESSSSLTG). 2 GATA-type zinc fingers span residues 365-390 (CFNC…CNAC) and 419-443 (CANC…CNAC).

Its subcellular location is the nucleus. The protein localises to the cytoplasm. In terms of biological role, activates genes required for amino acid biosynthesis and acts as a master transcriptional regulator during amino acid starvation. Binds variations of the DNA sequence 5'-GAT[AC]GC-3'. The polypeptide is Transcription factor fil1 (Schizosaccharomyces pombe (strain 972 / ATCC 24843) (Fission yeast)).